A 358-amino-acid chain; its full sequence is MRTDLFDFDLPQGAIALRPASPRDAARMLVVEASGALHDRVVSELPEWLRPGDALVVNDTKVIAAQLTGRRIGRDTEPKIDATLIKRLDGSRWQALVKPAKKLLPGDIVRFGHDGRVCLLGQLDATVEAKGEAGEIILAFTLHGPVLDQAIAELGAPPLPPYIASKRAPDDRDAADYQTMFAANEGAVAAPTAGLHFTKALEQALAARGVTLHRVTLHVGAGTFLPVKTEDTAEHKMHAEWGCLSRETADALNAARAADGRIVAVGTTSLRLLESAAGDDGRLAPFADDTAIFITPGYRFKAVDVLMTNFHLPRSTLFMLVSAFAGLDTMQRAYAHAIKSGYRFYSYGDACLLFRNPS.

The protein belongs to the QueA family. In terms of assembly, monomer.

Its subcellular location is the cytoplasm. The enzyme catalyses 7-aminomethyl-7-carbaguanosine(34) in tRNA + S-adenosyl-L-methionine = epoxyqueuosine(34) in tRNA + adenine + L-methionine + 2 H(+). It functions in the pathway tRNA modification; tRNA-queuosine biosynthesis. Functionally, transfers and isomerizes the ribose moiety from AdoMet to the 7-aminomethyl group of 7-deazaguanine (preQ1-tRNA) to give epoxyqueuosine (oQ-tRNA). This chain is S-adenosylmethionine:tRNA ribosyltransferase-isomerase, found in Rhodopseudomonas palustris (strain BisA53).